The primary structure comprises 214 residues: Homeobox protein HEX homolog pha-2 (214 aa).

Disordered regions lie at residues 1 to 50 and 180 to 214; these read MDQK…QKME and RRVR…LSHG. Residues 24 to 34 are compositionally biased toward low complexity; it reads SSESPIPTGSE. Residues 35 to 44 show a composition bias toward polar residues; sequence CSLNESSDTT. Residues 124–183 constitute a DNA-binding region (homeobox); that stretch reads RKGGQIRFTNEQTDALEHKFDSHKYLSPQERKKLAKSLSLSERQVKTWFQNRRAKWRRVR. A compositionally biased stretch (polar residues) spans 200–214; that stretch reads SLGQLQSSNPFLSHG.

It is found in the nucleus. In terms of biological role, transcriptional repressor. Involved in pharyngeal development and required for the formation of the pharyngeal isthmus. Plays a role in modulating cytoskeleton in the muscle cells of the isthmus. Regulates expression of the acetylcholinesterase genes ace-1 and ace-2. May regulate its own expression. The protein is Homeobox protein HEX homolog pha-2 of Caenorhabditis elegans.